A 372-amino-acid chain; its full sequence is Chaperone protein DnaJ (372 aa).

A J domain is found at 5-69; sequence DYYEVLGVDR…QKKARYDQFG (65 aa). The CR-type zinc-finger motif lies at 129–211; sequence GKETEIEIPR…CSGKGKVRKR (83 aa). Zn(2+)-binding residues include Cys-142, Cys-145, Cys-159, Cys-162, Cys-185, Cys-188, Cys-199, and Cys-202. 4 CXXCXGXG motif repeats span residues 142 to 149, 159 to 166, 185 to 192, and 199 to 206; these read CGTCHGSG, CSHCGGSG, CNYCEGTG, and CATCSGKG.

This sequence belongs to the DnaJ family. In terms of assembly, homodimer. Requires Zn(2+) as cofactor.

The protein resides in the cytoplasm. Its function is as follows. Participates actively in the response to hyperosmotic and heat shock by preventing the aggregation of stress-denatured proteins and by disaggregating proteins, also in an autonomous, DnaK-independent fashion. Unfolded proteins bind initially to DnaJ; upon interaction with the DnaJ-bound protein, DnaK hydrolyzes its bound ATP, resulting in the formation of a stable complex. GrpE releases ADP from DnaK; ATP binding to DnaK triggers the release of the substrate protein, thus completing the reaction cycle. Several rounds of ATP-dependent interactions between DnaJ, DnaK and GrpE are required for fully efficient folding. Also involved, together with DnaK and GrpE, in the DNA replication of plasmids through activation of initiation proteins. This Shouchella clausii (strain KSM-K16) (Alkalihalobacillus clausii) protein is Chaperone protein DnaJ.